The following is a 199-amino-acid chain: Recombination protein RecR (199 aa).

A C4-type zinc finger spans residues 57–72 (CNLCNNFSEQEICPLC). The 96-residue stretch at 80 to 175 (TLLCIVEMPS…QVSRIARGLP (96 aa)) folds into the Toprim domain.

It belongs to the RecR family.

May play a role in DNA repair. It seems to be involved in an RecBC-independent recombinational process of DNA repair. It may act with RecF and RecO. The protein is Recombination protein RecR of Methylobacillus flagellatus (strain ATCC 51484 / DSM 6875 / VKM B-1610 / KT).